The sequence spans 91 residues: Acylphosphatase (91 aa).

Residues 6–91 (CMRCYISGRV…WEDYISFDVL (86 aa)) form the Acylphosphatase-like domain. Catalysis depends on residues R21 and N39.

This sequence belongs to the acylphosphatase family.

It catalyses the reaction an acyl phosphate + H2O = a carboxylate + phosphate + H(+). The sequence is that of Acylphosphatase (acyP) from Legionella pneumophila (strain Corby).